A 208-amino-acid polypeptide reads, in one-letter code: Small ribosomal subunit protein uS3 (208 aa).

Residues 38-106 (IRDYIKARLY…EILIDIQEVR (69 aa)) form the KH type-2 domain.

This sequence belongs to the universal ribosomal protein uS3 family. As to quaternary structure, part of the 30S ribosomal subunit. Forms a tight complex with proteins S10 and S14.

Its function is as follows. Binds the lower part of the 30S subunit head. Binds mRNA in the 70S ribosome, positioning it for translation. This chain is Small ribosomal subunit protein uS3, found in Syntrophobacter fumaroxidans (strain DSM 10017 / MPOB).